We begin with the raw amino-acid sequence, 140 residues long: Ig heavy chain V region 93G7 (140 aa).

Residues 1 to 19 (MGWSFIFLFLLSVTAGVHS) form the signal peptide. The Ig-like domain maps to 20–139 (EVQLQQSGAE…WGQGTPLTVS (120 aa)).

This chain is Ig heavy chain V region 93G7, found in Mus musculus (Mouse).